The chain runs to 118 residues: Thioredoxin H-type (118 aa).

The Thioredoxin domain occupies 2–114; that stretch reads AAEEGQVIGC…LQQTIAKHMA (113 aa). Active-site nucleophile residues include C40 and C43. A disulfide bridge links C40 with C43.

The protein belongs to the thioredoxin family. Plant H-type subfamily.

Its subcellular location is the cytoplasm. In terms of biological role, participates in various redox reactions through the reversible oxidation of the active center dithiol to a disulfide. The H form is known to activate a number of cytosolic enzymes. This Ricinus communis (Castor bean) protein is Thioredoxin H-type.